Consider the following 133-residue polypeptide: MGLTSQLIPMLVCLLACTSNFVHGHKCDVTLQEIIKTLNILTAKKNLCMELPVEDVFATTKNTTEKETFCRAGTVLRHIYRHHKCFNQPLSGLHRNLSSMANMTCSVNEAKKSTLKDFLERLKMIMKEKYSKC.

A signal peptide spans 1–24; it reads MGLTSQLIPMLVCLLACTSNFVHG. 3 cysteine pairs are disulfide-bonded: C27–C133, C48–C85, and C70–C105. N-linked (GlcNAc...) asparagine glycans are attached at residues N62, N96, and N102.

Belongs to the IL-4/IL-13 family.

The protein resides in the secreted. Functionally, participates in at least several B-cell activation processes as well as of other cell types. It is a costimulator of DNA-synthesis. It induces the expression of class II MHC molecules on resting B-cells. It enhances both secretion and cell surface expression of IgE and IgG1. It also regulates the expression of the low affinity Fc receptor for IgE (CD23) on both lymphocytes and monocytes. Positively regulates IL31RA expression in macrophages. Stimulates autophagy in dendritic cells by interfering with mTORC1 signaling and through the induction of RUFY4. The protein is Interleukin-4 (IL4) of Tursiops truncatus (Atlantic bottle-nosed dolphin).